A 339-amino-acid polypeptide reads, in one-letter code: Nicotinate-nucleotide--dimethylbenzimidazole phosphoribosyltransferase (339 aa).

The Proton acceptor role is filled by Glu-306.

It belongs to the CobT family.

The enzyme catalyses 5,6-dimethylbenzimidazole + nicotinate beta-D-ribonucleotide = alpha-ribazole 5'-phosphate + nicotinate + H(+). It participates in nucleoside biosynthesis; alpha-ribazole biosynthesis; alpha-ribazole from 5,6-dimethylbenzimidazole: step 1/2. Its function is as follows. Catalyzes the synthesis of alpha-ribazole-5'-phosphate from nicotinate mononucleotide (NAMN) and 5,6-dimethylbenzimidazole (DMB). The sequence is that of Nicotinate-nucleotide--dimethylbenzimidazole phosphoribosyltransferase from Brucella melitensis biotype 2 (strain ATCC 23457).